Here is a 272-residue protein sequence, read N- to C-terminus: Phosphatidylglycerol--prolipoprotein diacylglyceryl transferase (272 aa).

A run of 7 helical transmembrane segments spans residues 17–37, 59–79, 95–115, 129–149, 176–196, 202–222, and 237–257; these read LAIR…LGFG, MLFF…VLFY, WEGG…MWLF, FIAP…FING, SQLY…WLFA, MGAV…AAEF, and LSMG…MVVW. Arg142 is an a 1,2-diacyl-sn-glycero-3-phospho-(1'-sn-glycerol) binding site.

Belongs to the Lgt family.

The protein resides in the cell inner membrane. The enzyme catalyses L-cysteinyl-[prolipoprotein] + a 1,2-diacyl-sn-glycero-3-phospho-(1'-sn-glycerol) = an S-1,2-diacyl-sn-glyceryl-L-cysteinyl-[prolipoprotein] + sn-glycerol 1-phosphate + H(+). The protein operates within protein modification; lipoprotein biosynthesis (diacylglyceryl transfer). In terms of biological role, catalyzes the transfer of the diacylglyceryl group from phosphatidylglycerol to the sulfhydryl group of the N-terminal cysteine of a prolipoprotein, the first step in the formation of mature lipoproteins. The protein is Phosphatidylglycerol--prolipoprotein diacylglyceryl transferase of Cupriavidus necator (strain ATCC 17699 / DSM 428 / KCTC 22496 / NCIMB 10442 / H16 / Stanier 337) (Ralstonia eutropha).